Here is a 1607-residue protein sequence, read N- to C-terminus: Thrombospondin type-1 domain-containing protein 7B (1607 aa).

An N-terminal signal peptide occupies residues 1-31 (MFLRSDLAVTHWVSRSMRKLFLVLSLLLSQA). Residues 32-1556 (AHLEGRKDNQ…QPLDPDGRVK (1525 aa)) are Extracellular-facing. TSP type-1 domains are found at residues 40–98 (NQFL…RVCD), 102–177 (DLFQ…IPCP), 179–233 (DCVV…VSCP), 336–392 (DCET…IAEG), 399–482 (PRYS…VPCS), 484–543 (DCIV…PMCH), 601–661 (DCVV…HSCT), 662–735 (QLYW…LPCK), 737–796 (DCLV…SLCP), 797–869 (SYRW…IPCR), 871–924 (DCTF…CPCD), 925–999 (TFMS…IPCP), 1001–1126 (DCKL…LLCP), 1128–1182 (ECVM…ENCF), 1183–1246 (QFQY…VECV), 1248–1303 (NCQL…TPCY), 1304–1369 (SWVL…VPCP), and 1371–1432 (DCHI…GKCY). Residues Asn-150 and Asn-219 are each glycosylated (N-linked (GlcNAc...) asparagine). 3 cysteine pairs are disulfide-bonded: Cys-411-Cys-477, Cys-431-Cys-481, and Cys-442-Cys-466. Cystine bridges form between Cys-602–Cys-643, Cys-613–Cys-617, and Cys-655–Cys-660. A glycan (N-linked (GlcNAc...) asparagine) is linked at Asn-683. Disulfide bonds link Cys-738–Cys-779, Cys-749–Cys-753, and Cys-789–Cys-795. The N-linked (GlcNAc...) asparagine glycan is linked to Asn-757. Residue Asn-842 is glycosylated (N-linked (GlcNAc...) asparagine). Residue Asn-933 is glycosylated (N-linked (GlcNAc...) asparagine). 5 disulfide bridges follow: Cys-937-Cys-994, Cys-960-Cys-998, Cys-971-Cys-984, Cys-1002-Cys-1039, and Cys-1013-Cys-1017. An N-linked (GlcNAc...) asparagine glycan is attached at Asn-985. N-linked (GlcNAc...) asparagine glycosylation occurs at Asn-1105. Cys-1121 and Cys-1125 are joined by a disulfide. N-linked (GlcNAc...) asparagine glycosylation is found at Asn-1187 and Asn-1199. Disulfide bonds link Cys-1249–Cys-1287, Cys-1260–Cys-1264, and Cys-1297–Cys-1302. N-linked (GlcNAc...) asparagine glycans are attached at residues Asn-1309 and Asn-1335. Intrachain disulfides connect Cys-1372–Cys-1416, Cys-1383–Cys-1387, and Cys-1426–Cys-1431. N-linked (GlcNAc...) asparagine glycosylation is found at Asn-1457 and Asn-1525. A helical transmembrane segment spans residues 1557–1577 (MWVYGVSGGSFLIMIFLVFTS). Residues 1578 to 1607 (YLVCKKPKPHQSTPRHQKPLTLAYDGDLDM) lie on the Cytoplasmic side of the membrane.

It is found in the membrane. The sequence is that of Thrombospondin type-1 domain-containing protein 7B from Mus musculus (Mouse).